A 481-amino-acid chain; its full sequence is UDP-N-acetylmuramate--L-alanine ligase (481 aa).

122-128 (GVHGKTT) contributes to the ATP binding site.

This sequence belongs to the MurCDEF family.

It is found in the cytoplasm. The catalysed reaction is UDP-N-acetyl-alpha-D-muramate + L-alanine + ATP = UDP-N-acetyl-alpha-D-muramoyl-L-alanine + ADP + phosphate + H(+). It participates in cell wall biogenesis; peptidoglycan biosynthesis. Its function is as follows. Cell wall formation. This chain is UDP-N-acetylmuramate--L-alanine ligase, found in Treponema pallidum (strain Nichols).